A 106-amino-acid polypeptide reads, in one-letter code: MEVKISTFLQIAVLIVLGIHLIAAGQDTDGKEKSDEYELFTVEYCGTNCTQLENGSWTACTGKNGTCRCFHENDKKVGLCLSTEYTDFSEYPDPNSEEIKAASPLP.

A signal peptide spans 1–24 (MEVKISTFLQIAVLIVLGIHLIAA). Intrachain disulfides connect Cys45-Cys67, Cys49-Cys69, and Cys60-Cys80. Asn48, Asn54, and Asn64 each carry an N-linked (GlcNAc...) asparagine glycan.

The protein localises to the secreted. Functionally, salivary chemokine-binding protein which binds to host chemokines CXCL1, CXCL2 and CXCL8. The protein is Evasin P1168 of Ixodes ricinus (Common tick).